The chain runs to 420 residues: Gamma-glutamyl phosphate reductase (420 aa).

It belongs to the gamma-glutamyl phosphate reductase family.

Its subcellular location is the cytoplasm. The catalysed reaction is L-glutamate 5-semialdehyde + phosphate + NADP(+) = L-glutamyl 5-phosphate + NADPH + H(+). It functions in the pathway amino-acid biosynthesis; L-proline biosynthesis; L-glutamate 5-semialdehyde from L-glutamate: step 2/2. Its function is as follows. Catalyzes the NADPH-dependent reduction of L-glutamate 5-phosphate into L-glutamate 5-semialdehyde and phosphate. The product spontaneously undergoes cyclization to form 1-pyrroline-5-carboxylate. The polypeptide is Gamma-glutamyl phosphate reductase (Cereibacter sphaeroides (strain ATCC 17029 / ATH 2.4.9) (Rhodobacter sphaeroides)).